The sequence spans 331 residues: Ribosomal RNA small subunit methyltransferase H (331 aa).

Residues 38–40 (GGY), Asp-56, Phe-83, Asp-100, and Gln-107 each bind S-adenosyl-L-methionine. The disordered stretch occupies residues 308–331 (TDAPAGPVDPQVLGMPLIPKKGRR).

The protein belongs to the methyltransferase superfamily. RsmH family.

It localises to the cytoplasm. The catalysed reaction is cytidine(1402) in 16S rRNA + S-adenosyl-L-methionine = N(4)-methylcytidine(1402) in 16S rRNA + S-adenosyl-L-homocysteine + H(+). Functionally, specifically methylates the N4 position of cytidine in position 1402 (C1402) of 16S rRNA. In Cereibacter sphaeroides (strain ATCC 17025 / ATH 2.4.3) (Rhodobacter sphaeroides), this protein is Ribosomal RNA small subunit methyltransferase H.